The following is a 397-amino-acid chain: Izumo sperm-egg fusion protein 1 (397 aa).

An N-terminal signal peptide occupies residues 1-21 (MGPHFTLLLAALANCLCPGRP). 5 disulfides stabilise this stretch: Cys-22-Cys-149, Cys-25-Cys-152, Cys-135-Cys-159, Cys-139-Cys-165, and Cys-182-Cys-233. Residues 22–319 (CIKCDQFVTD…QNPEKKMKTR (298 aa)) lie on the Extracellular side of the membrane. The segment at 148-160 (WCLKCEKQLHICR) is important for interaction with IZUMO1R. The Ig-like C2-type domain occupies 167 to 251 (ERHIEVHRSE…HATVIRYDVT (85 aa)). An N-linked (GlcNAc...) asparagine glycan is attached at Asn-204. The tract at residues 271-292 (EHETPVHVTPQTPPGQEPESEL) is disordered. A helical membrane pass occupies residues 320 to 340 (LLILLTLGFVVLVASIIISVL). Over 341–397 (HFRKVSAKLKNASDEVKPTASGSKSDQSLSQQMGLKKASQADFNSDYSGDKSEATEN) the chain is Cytoplasmic. The tract at residues 351-397 (NASDEVKPTASGSKSDQSLSQQMGLKKASQADFNSDYSGDKSEATEN) is disordered. Polar residues predominate over residues 360–373 (ASGSKSDQSLSQQM). Ser-379 is modified (phosphoserine). Basic and acidic residues predominate over residues 388-397 (SGDKSEATEN).

Belongs to the Izumo family. As to quaternary structure, monomer, homodimer; disulfide-linked and homooligomer; depending on the context. Interacts with IZUMO1R/JUNO. IZUMO1 and IZUMO1R/JUNO form a complex with 1:1 stoichiometry. In gamete recognition, IZUMO1R/JUNO first binds to monomeric IZUMO1. The weak, but specific interaction with IZUMO1R/JUNO induces IZUMO1 homodimerization. The process follows a tight binding phase where IZUMO1 bends the entire structure towards the sperm membrane side through a thiol-disulfide exchange reaction. The molecule no longer binds to IZUMO1R/JUNO and instead binds to a putative second oocyte receptor. Interacts with ACE3. Part of a oolemmal binding multimeric complex (IZUMO1 complex) composed at least of IZUMO1 and GLIPR1L1; the complex assemblage is influenced by the maturation status of the male germ cell. Interacts with GLIPR1L1. Interacts with FREY; the interaction retains IZUMO1 at the endoplasmic reticulum membrane and coordinates IZUMO1 complex assembly. Interacts with WDR54. Forms a complex with SPACA6 and TMEM81 on spermatocyte cell membrane. N-glycosylated. Glycosylation is not essential for fusion and for proper protein trafficking in sperm. In terms of processing, phosphorylated. The cytoplasmic C-terminus is phosphorylated and undergoes phosphorylation changes during epididymal transit. As to expression, sperm-specific (at protein level). Detectable on sperm surface only after the acrosome reaction. Expressed in spermatozoa, more abundantly expressed in the head than the tail (at protein level).

It is found in the cell membrane. Its subcellular location is the cytoplasmic vesicle. The protein resides in the secretory vesicle. It localises to the acrosome membrane. Its function is as follows. Essential sperm cell-surface protein required for fertilization by acting as a ligand for IZUMO1R/JUNO receptor on egg. The IZUMO1:IZUMO1R/JUNO interaction is a necessary adhesion event between sperm and egg that is required for fertilization but is not sufficient for cell fusion. The ligand-receptor interaction probably does not act as a membrane 'fusogen'. Plays a critical role in sperm-oolemma binding prior to plasma membrane fusion. Can mediate cell-cell fusion in cultured mammalian cells independently of its binding to IZUMO1R/JUNO. The polypeptide is Izumo sperm-egg fusion protein 1 (Mus musculus (Mouse)).